The sequence spans 304 residues: Ribonuclease Z (304 aa).

Zn(2+) contacts are provided by H61, H63, D65, H66, H138, D206, and H265. The active-site Proton acceptor is D65.

This sequence belongs to the RNase Z family. In terms of assembly, homodimer. Zn(2+) is required as a cofactor.

The enzyme catalyses Endonucleolytic cleavage of RNA, removing extra 3' nucleotides from tRNA precursor, generating 3' termini of tRNAs. A 3'-hydroxy group is left at the tRNA terminus and a 5'-phosphoryl group is left at the trailer molecule.. Zinc phosphodiesterase, which displays some tRNA 3'-processing endonuclease activity. Probably involved in tRNA maturation, by removing a 3'-trailer from precursor tRNA. This is Ribonuclease Z from Lachnoclostridium phytofermentans (strain ATCC 700394 / DSM 18823 / ISDg) (Clostridium phytofermentans).